The chain runs to 644 residues: Threonine--tRNA ligase (644 aa).

In terms of domain architecture, TGS spans Val8 to Thr70. The segment at Asp251–Pro541 is catalytic. Zn(2+)-binding residues include Cys342, His393, and His518.

It belongs to the class-II aminoacyl-tRNA synthetase family. In terms of assembly, homodimer. The cofactor is Zn(2+).

Its subcellular location is the cytoplasm. It catalyses the reaction tRNA(Thr) + L-threonine + ATP = L-threonyl-tRNA(Thr) + AMP + diphosphate + H(+). In terms of biological role, catalyzes the attachment of threonine to tRNA(Thr) in a two-step reaction: L-threonine is first activated by ATP to form Thr-AMP and then transferred to the acceptor end of tRNA(Thr). Also edits incorrectly charged L-seryl-tRNA(Thr). The polypeptide is Threonine--tRNA ligase (Caldanaerobacter subterraneus subsp. tengcongensis (strain DSM 15242 / JCM 11007 / NBRC 100824 / MB4) (Thermoanaerobacter tengcongensis)).